The primary structure comprises 79 residues: Large ribosomal subunit protein uL24 (79 aa).

Positions 1-29 (MPKLKKLLLKVSTSKPNTNPPSQNEEKGT) are disordered. The span at 11-23 (VSTSKPNTNPPSQ) shows a compositional bias: polar residues.

The protein belongs to the universal ribosomal protein uL24 family. As to quaternary structure, part of the 50S ribosomal subunit.

Its function is as follows. One of two assembly initiator proteins, it binds directly to the 5'-end of the 23S rRNA, where it nucleates assembly of the 50S subunit. In terms of biological role, one of the proteins that surrounds the polypeptide exit tunnel on the outside of the subunit. The protein is Large ribosomal subunit protein uL24 (rplX) of Onion yellows phytoplasma (strain OY-M).